The following is a 257-amino-acid chain: NAD-capped RNA hydrolase NudC (257 aa).

Arginine 69 provides a ligand contact to substrate. Zn(2+) contacts are provided by cysteine 98 and cysteine 101. Glutamate 111 provides a ligand contact to substrate. Zn(2+)-binding residues include cysteine 116 and cysteine 119. A substrate-binding site is contributed by tyrosine 124. Residues proline 125 to threonine 248 enclose the Nudix hydrolase domain. A divalent metal cation-binding residues include alanine 158, glutamate 174, and glutamate 178. The Nudix box motif lies at glycine 159 to arginine 180. A substrate-binding site is contributed by glutamine 192–serine 199. Glutamate 219 lines the a divalent metal cation pocket. Alanine 241 is a binding site for substrate.

It belongs to the Nudix hydrolase family. NudC subfamily. In terms of assembly, homodimer. Mg(2+) is required as a cofactor. It depends on Mn(2+) as a cofactor. Requires Zn(2+) as cofactor.

It catalyses the reaction a 5'-end NAD(+)-phospho-ribonucleoside in mRNA + H2O = a 5'-end phospho-adenosine-phospho-ribonucleoside in mRNA + beta-nicotinamide D-ribonucleotide + 2 H(+). It carries out the reaction NAD(+) + H2O = beta-nicotinamide D-ribonucleotide + AMP + 2 H(+). The enzyme catalyses NADH + H2O = reduced beta-nicotinamide D-ribonucleotide + AMP + 2 H(+). In terms of biological role, mRNA decapping enzyme that specifically removes the nicotinamide adenine dinucleotide (NAD) cap from a subset of mRNAs by hydrolyzing the diphosphate linkage to produce nicotinamide mononucleotide (NMN) and 5' monophosphate mRNA. The NAD-cap is present at the 5'-end of some mRNAs and stabilizes RNA against 5'-processing. Has preference for mRNAs with a 5'-end purine. Catalyzes the hydrolysis of a broad range of dinucleotide pyrophosphates. The chain is NAD-capped RNA hydrolase NudC from Edwardsiella ictaluri (strain 93-146).